The following is a 295-amino-acid chain: UDP-N-acetylenolpyruvoylglucosamine reductase (295 aa).

The region spanning 26–189 (VGGRADVLFK…VEAEFKGVNS (164 aa)) is the FAD-binding PCMH-type domain. The active site involves arginine 169. The active-site Proton donor is the cysteine 218. Residue glutamate 288 is part of the active site.

Belongs to the MurB family. The cofactor is FAD.

The protein resides in the cytoplasm. It carries out the reaction UDP-N-acetyl-alpha-D-muramate + NADP(+) = UDP-N-acetyl-3-O-(1-carboxyvinyl)-alpha-D-glucosamine + NADPH + H(+). It participates in cell wall biogenesis; peptidoglycan biosynthesis. Its function is as follows. Cell wall formation. The protein is UDP-N-acetylenolpyruvoylglucosamine reductase of Wolbachia pipientis wMel.